The sequence spans 382 residues: Mannitol-1-phosphate 5-dehydrogenase (382 aa).

3 to 14 (ALHFGAGNIGRG) serves as a coordination point for NAD(+).

It belongs to the mannitol dehydrogenase family.

The catalysed reaction is D-mannitol 1-phosphate + NAD(+) = beta-D-fructose 6-phosphate + NADH + H(+). This is Mannitol-1-phosphate 5-dehydrogenase from Salmonella typhi.